The following is a 396-amino-acid chain: MMTGKSAPRRLSIFGSTGSIGQNTLNVVDHLGGRENFEISVLTGSGNVELLARQAKSSGARLAVTANDRHYESLKSELSGTGIAVASGKSGLMEAADRDVDWVMAAIVGTAGLAPTLAAARRGADIALANKECLVSAGDLFIAAIREGGGRLLPVDSEHNAIFQVLEENQRHAVERVILTASGGPFRTASLRDMADVTVETARAHPNWSMGLKISIDSASMFNKALEMIEALHLFSLRPEQIEVIFHPQSIIHSMVGYTDGSVLAQLGAPDMRTAIGYALSFPRRPNLPVERLDFAKLARLDFEAPDEVRFPALRLARLAMTRGGVQGAVLNGAKEVALEAFIEGRLSFLAMAEVTERVMDDLAGLPQAAGMDDVFAADREARQRAAELMTLAIAE.

The NADPH site is built by threonine 17, glycine 18, serine 19, isoleucine 20, asparagine 47, and asparagine 130. Lysine 131 is a binding site for 1-deoxy-D-xylulose 5-phosphate. Glutamate 132 serves as a coordination point for NADPH. Residue aspartate 156 coordinates Mn(2+). 1-deoxy-D-xylulose 5-phosphate contacts are provided by serine 157, glutamate 158, serine 182, and histidine 205. Position 158 (glutamate 158) interacts with Mn(2+). Glycine 211 serves as a coordination point for NADPH. 4 residues coordinate 1-deoxy-D-xylulose 5-phosphate: serine 218, asparagine 223, lysine 224, and glutamate 227. Residue glutamate 227 participates in Mn(2+) binding.

It belongs to the DXR family. Mg(2+) serves as cofactor. It depends on Mn(2+) as a cofactor.

It carries out the reaction 2-C-methyl-D-erythritol 4-phosphate + NADP(+) = 1-deoxy-D-xylulose 5-phosphate + NADPH + H(+). It functions in the pathway isoprenoid biosynthesis; isopentenyl diphosphate biosynthesis via DXP pathway; isopentenyl diphosphate from 1-deoxy-D-xylulose 5-phosphate: step 1/6. Functionally, catalyzes the NADPH-dependent rearrangement and reduction of 1-deoxy-D-xylulose-5-phosphate (DXP) to 2-C-methyl-D-erythritol 4-phosphate (MEP). This chain is 1-deoxy-D-xylulose 5-phosphate reductoisomerase, found in Rhizobium johnstonii (strain DSM 114642 / LMG 32736 / 3841) (Rhizobium leguminosarum bv. viciae).